The sequence spans 235 residues: Pathogen-related protein (235 aa).

The sequence is that of Pathogen-related protein from Hordeum vulgare (Barley).